The primary structure comprises 72 residues: Heat-stable enterotoxin ST-IA/ST-P (72 aa).

An N-terminal signal peptide occupies residues 1 to 19 (MKKLMLAIFISVLSFPSFS). Residues 20-54 (QSTESLDSSKEKITLETKKCDVVKNNSEKKSENMN) constitute a propeptide that is removed on maturation. 3 cysteine pairs are disulfide-bonded: cysteine 59–cysteine 64, cysteine 60–cysteine 68, and cysteine 63–cysteine 71.

Belongs to the heat-stable enterotoxin family.

The protein localises to the secreted. Its function is as follows. Toxin which activates the particulate form of guanylate cyclase and increases cyclic GMP levels within the host intestinal epithelial cells. This Escherichia coli protein is Heat-stable enterotoxin ST-IA/ST-P (sta1).